The sequence spans 332 residues: MSMLAERRRKQKWTVDPRNTAWSNDDSKFGQKMLEKMGWSKGKGLGAQEQGATEHIKVKVKNNHLGLGATNNNEDNWIAHQDDFNQLLAALNTCHGQETADSSDKKEKKSFSLEEKSKISKNRVHYMKFTKGKDLSSRSETDLDCIFGKRRNKKLAQDGCSNSSADEVNTSLTTTTTTTSAFTIQEYFAKRMAQLKNKPQASAPGSDLSETPVERKKGKKKNKEAADTDVENSPQHKAKRHKKKKRVEAERGPVAKKRDRAELQPGGPSEDECSDASVEAAEDCVQTPDIQDDVPKPKKRKAKKKLQRPEGVEIDATLDRAPVKKKKKKVSR.

Disordered stretches follow at residues 1 to 27 and 196 to 332; these read MSMLAERRRKQKWTVDPRNTAWSNDDS and KNKP…KVSR. The 47-residue stretch at 26 to 72 folds into the G-patch domain; sequence DSKFGQKMLEKMGWSKGKGLGAQEQGATEHIKVKVKNNHLGLGATNN. The residue at position 233 (serine 233) is a Phosphoserine. Positions 236-246 are enriched in basic residues; sequence HKAKRHKKKKR. The tract at residues 254-328 is telomerase inhibitory domain (TID); that stretch reads VAKKRDRAEL…DRAPVKKKKK (75 aa). Residues serine 269, serine 274, and serine 277 each carry the phosphoserine modification. The short motif at 291-301 is the TBM element; the sequence is QDDVPKPKKRK. The segment covering 297-306 has biased composition (basic residues); sequence PKKRKAKKKL. Residues 307-322 are compositionally biased toward basic and acidic residues; it reads QRPEGVEIDATLDRAP. Over residues 323–332 the composition is skewed to basic residues; sequence VKKKKKKVSR.

This sequence belongs to the PINX1 family. As to quaternary structure, interacts with MCRS1, TERT, TERF1, NCL/nucleolin, and the telomerase RNA.

It is found in the nucleus. Its subcellular location is the nucleolus. The protein resides in the chromosome. It localises to the telomere. The protein localises to the centromere. It is found in the kinetochore. Functionally, microtubule-binding protein essential for faithful chromosome segregation. Mediates TRF1 and TERT accumulation in nucleolus and enhances TRF1 binding to telomeres. Inhibits telomerase activity. May inhibit cell proliferation and act as tumor suppressor. The polypeptide is PIN2/TERF1-interacting telomerase inhibitor 1 (Pinx1) (Mus musculus (Mouse)).